The chain runs to 157 residues: Phosphopantetheine adenylyltransferase (157 aa).

Thr8 contacts substrate. ATP is bound by residues 8 to 9 (TF) and His16. The substrate site is built by Lys40, Thr72, and Arg86. Residues 87–89 (GLR), Glu97, and 122–128 (YSFLSSS) each bind ATP.

This sequence belongs to the bacterial CoaD family. In terms of assembly, homohexamer. Mg(2+) is required as a cofactor.

The protein localises to the cytoplasm. The enzyme catalyses (R)-4'-phosphopantetheine + ATP + H(+) = 3'-dephospho-CoA + diphosphate. It functions in the pathway cofactor biosynthesis; coenzyme A biosynthesis; CoA from (R)-pantothenate: step 4/5. Functionally, reversibly transfers an adenylyl group from ATP to 4'-phosphopantetheine, yielding dephospho-CoA (dPCoA) and pyrophosphate. In Prochlorococcus marinus (strain MIT 9215), this protein is Phosphopantetheine adenylyltransferase.